The chain runs to 567 residues: Urease subunit alpha (567 aa).

In terms of domain architecture, Urease spans 128 to 567; that stretch reads GGVDTHVHYI…LPLAQRYHLF (440 aa). Residues histidine 133, histidine 135, and lysine 216 each contribute to the Ni(2+) site. At lysine 216 the chain carries N6-carboxylysine. Histidine 218 lines the substrate pocket. The Ni(2+) site is built by histidine 245 and histidine 271. Histidine 319 serves as the catalytic Proton donor. Position 359 (aspartate 359) interacts with Ni(2+).

Belongs to the metallo-dependent hydrolases superfamily. Urease alpha subunit family. As to quaternary structure, heterotrimer of UreA (gamma), UreB (beta) and UreC (alpha) subunits. Three heterotrimers associate to form the active enzyme. Ni cation serves as cofactor. Post-translationally, carboxylation allows a single lysine to coordinate two nickel ions.

The protein localises to the cytoplasm. It catalyses the reaction urea + 2 H2O + H(+) = hydrogencarbonate + 2 NH4(+). It participates in nitrogen metabolism; urea degradation; CO(2) and NH(3) from urea (urease route): step 1/1. The sequence is that of Urease subunit alpha from Pseudoalteromonas translucida (strain TAC 125).